The sequence spans 307 residues: MNKKDHLRKDEEVSTTNSLVAGSLSGLFARTCIAPLDTVKIKLQVTPHNKNANVLINILKREGIRGFWKGNVPGSIMYIIYGGAQFGSYTYIGSFLRGGLDLNISPQLYSCLVGSLAGMTSSLASYPFDVLRTRFAANSQGQLIKLRDEIMAIWSHEGLMGFFSGCGSSMINIGLNTAIMFGVYESIKIFTEERSKLSDRRDPFTLLNELAGPISGFTSKLATFPLDTVRRRIQIRNSPNEERHDREFTKDIYKSYKNRRFLGVGISMVQQEGPLSLYRGVTMSLIKSVPSTAISLWSYELFMNKLG.

3 Solcar repeats span residues 13 to 95 (VSTT…IGSF), 105 to 190 (SPQL…IKIF), and 203 to 305 (PFTL…FMNK). Helical transmembrane passes span 19–36 (LVAG…IAPL), 76–96 (IMYI…GSFL), 108–126 (LYSC…LASY), 160–184 (MGFF…FGVY), 210–226 (LAGP…TFPL), and 280–297 (GVTM…ISLW).

Belongs to the mitochondrial carrier (TC 2.A.29) family.

The protein localises to the mitochondrion inner membrane. Mitochondrial transporter that mediates uptake of thiamine pyrophosphate (ThPP) into mitochondria. The sequence is that of Mitochondrial thiamine pyrophosphate carrier 1 (TPC1) from Candida glabrata (strain ATCC 2001 / BCRC 20586 / JCM 3761 / NBRC 0622 / NRRL Y-65 / CBS 138) (Yeast).